Reading from the N-terminus, the 410-residue chain is Metal tolerance protein 3 (410 aa).

The segment at 1–58 is disordered; that stretch reads MDGDDRRTPLLGGEGGSTRPPSLRRRDSARSLRSTFLSRLPDKVRGGGDPERPAADVD. Over 1–114 the chain is Cytoplasmic; it reads MDGDDRRTPL…EDKEQKQSES (114 aa). Residues 40–58 are compositionally biased toward basic and acidic residues; that stretch reads LPDKVRGGGDPERPAADVD. A helical transmembrane segment spans residues 115-135; sequence AMKISNYANIILLVFKVYATI. Topologically, residues 136–140 are vacuolar; sequence KTGSM. Residues 141 to 161 traverse the membrane as a helical segment; it reads AIAASTLDSLLDFLAGGILYF. The Cytoplasmic portion of the chain corresponds to 162 to 184; the sequence is THLTMKSVNIYKYPIGKLRVQPV. The chain crosses the membrane as a helical span at residues 185 to 205; that stretch reads GIIVFAAIMATLGFQVLIQAI. Over 206 to 221 the chain is Vacuolar; it reads EQLVENKAGEKMTPEQ. A helical membrane pass occupies residues 222 to 242; that stretch reads LIWLYSIMLSATVVKLALYIY. Residues 243 to 258 lie on the Cytoplasmic side of the membrane; that stretch reads CRSSGNSIVQAYAKDH. Residues 259–275 form a helical membrane-spanning segment; the sequence is YFDVVTNVVGLVAAVLG. At 276–284 the chain is on the vacuolar side; sequence DKFFWWIDP. The chain crosses the membrane as a helical span at residues 285–303; sequence VGAVLLAVYTIVNWSGTVY. Topologically, residues 304-410 are cytoplasmic; sequence ENAVTLVGQC…VRSRLPSTEP (107 aa).

The protein belongs to the cation diffusion facilitator (CDF) transporter (TC 2.A.4) family. SLC30A subfamily.

The protein resides in the vacuole membrane. Its function is as follows. Involved in sequestration of excess metal in the cytoplasm into vacuoles to maintain metal homeostasis. The chain is Metal tolerance protein 3 (MTP3) from Oryza sativa subsp. japonica (Rice).